A 371-amino-acid polypeptide reads, in one-letter code: Aspartate-semialdehyde dehydrogenase (371 aa).

NADP(+)-binding positions include 10–13, 37–38, and glutamine 74; these read RGMV and TS. Residue arginine 103 participates in phosphate binding. The active-site Acyl-thioester intermediate is the cysteine 136. Glutamine 163 contacts substrate. Residue serine 166 participates in NADP(+) binding. Substrate is bound at residue glutamate 243. Lysine 246 is a binding site for phosphate. A substrate-binding site is contributed by arginine 270. Histidine 277 (proton acceptor) is an active-site residue. Glutamine 353 provides a ligand contact to NADP(+).

Belongs to the aspartate-semialdehyde dehydrogenase family. As to quaternary structure, homodimer.

It catalyses the reaction L-aspartate 4-semialdehyde + phosphate + NADP(+) = 4-phospho-L-aspartate + NADPH + H(+). It participates in amino-acid biosynthesis; L-lysine biosynthesis via DAP pathway; (S)-tetrahydrodipicolinate from L-aspartate: step 2/4. Its pathway is amino-acid biosynthesis; L-methionine biosynthesis via de novo pathway; L-homoserine from L-aspartate: step 2/3. The protein operates within amino-acid biosynthesis; L-threonine biosynthesis; L-threonine from L-aspartate: step 2/5. Its function is as follows. Catalyzes the NADPH-dependent formation of L-aspartate-semialdehyde (L-ASA) by the reductive dephosphorylation of L-aspartyl-4-phosphate. This Haemophilus influenzae (strain ATCC 51907 / DSM 11121 / KW20 / Rd) protein is Aspartate-semialdehyde dehydrogenase.